The sequence spans 322 residues: Cysteine protease YopT (322 aa).

Catalysis depends on residues C139, H258, and D274.

The protein belongs to the peptidase C58 family. In terms of assembly, interacts with human ARHA.

It is found in the secreted. Its function is as follows. Cysteine protease, which is translocated into infected cells and plays a central role in pathogenesis by cleaving the C-terminus end of the human small GTPase RhoA/ARHA, a regulator of cytoskeleton. Once cleaved, ARHA loses its lipid modification, and is released from the cell membrane, leading to the subsequent disruption of actin cytoskeleton of the host cell. The polypeptide is Cysteine protease YopT (yopT) (Yersinia pestis).